The primary structure comprises 338 residues: Putative acyl-[acyl-carrier-protein] desaturase DesA1 (338 aa).

6 residues coordinate Fe cation: glutamate 76, glutamate 107, histidine 110, glutamate 167, glutamate 197, and histidine 200. Basic and acidic residues predominate over residues 314–328; that stretch reads EARTGKKVSAHELHK. Positions 314 to 338 are disordered; sequence EARTGKKVSAHELHKTAGKLAMSRR.

Belongs to the fatty acid desaturase type 2 family. As to quaternary structure, homodimer. It depends on Fe(2+) as a cofactor.

The protein localises to the cell surface. The protein operates within lipid metabolism; fatty acid metabolism. Its function is as follows. May be a desaturase involved in mycobacterial fatty acid biosynthesis. This is Putative acyl-[acyl-carrier-protein] desaturase DesA1 (desA1) from Mycobacterium tuberculosis (strain CDC 1551 / Oshkosh).